Consider the following 70-residue polypeptide: NADH-ubiquinone oxidoreductase chain 3 (70 aa).

The chain crosses the membrane as a helical span at residues 42–62; it reads FFVITLIFLIFDVEIYLLLPM.

The protein belongs to the complex I subunit 3 family.

It localises to the mitochondrion membrane. The enzyme catalyses a ubiquinone + NADH + 5 H(+)(in) = a ubiquinol + NAD(+) + 4 H(+)(out). In terms of biological role, core subunit of the mitochondrial membrane respiratory chain NADH dehydrogenase (Complex I) that is believed to belong to the minimal assembly required for catalysis. Complex I functions in the transfer of electrons from NADH to the respiratory chain. The immediate electron acceptor for the enzyme is believed to be ubiquinone. The polypeptide is NADH-ubiquinone oxidoreductase chain 3 (ND3) (Artemia salina (Brine shrimp)).